A 685-amino-acid chain; its full sequence is E3 ubiquitin ligase Rnf157 (685 aa).

Gly2 carries N-myristoyl glycine lipidation. Residues 276–315 (ECVVCLSDVRDTLILPCRHLCLCNTCADTLRYQANNCPIC) form an RING-type zinc finger. A D-box 1 motif is present at residues 329–332 (RKKL). Disordered regions lie at residues 339–361 (SFNP…ENIP), 433–584 (LSKS…AGEQ), and 650–672 (LGGR…EASA). Over residues 434–443 (SKSISQNSSV) the composition is skewed to low complexity. Polar residues predominate over residues 478-537 (ESENLTLSSSGAVDQSSCTGTPLSSTISSPEDPASSSLAQSVMSMASSQISTDTVSSMSG). Positions 552-561 (PSPRAASRAP) are enriched in low complexity. Positions 657 to 660 (ARPR) match the D-box 2 motif.

As to quaternary structure, interacts with APBB1. Interacts with CHD1; CHD1-binding controls RNF157 stability. Also interacts with ATRN, MEGF8, TECR, MSI2, PLRG1, BYSL, MTERF3, PSMA1, MRPS18B, PRPF4, FASTKD2, SLC25A1, SMU1, CNOT9, MRPS2, MAGT1, FXR2, EMD, PSMD8, HDAC1, RAN, HSD17B12, TXNDC5 and MRPL19.

It localises to the cytoplasm. The enzyme catalyses S-ubiquitinyl-[E2 ubiquitin-conjugating enzyme]-L-cysteine + [acceptor protein]-L-lysine = [E2 ubiquitin-conjugating enzyme]-L-cysteine + N(6)-ubiquitinyl-[acceptor protein]-L-lysine.. Its function is as follows. E3 ubiquitin ligase that ubiquitinates APBB1 for its degradation by the proteasome and thus prevents apoptosis and promotes survival of neurons. Has a dual role in neurons as it is also required for dendrite growth and maintenance for which its ligase activity is not critical. May act as a scaffold molecule to regulate this process. Acts as a downstream effector of the interconnected PI3K and MAPK signaling pathways and thus participates in the regulation of the cell cycle. This is E3 ubiquitin ligase Rnf157 (Rnf157) from Mus musculus (Mouse).